A 105-amino-acid polypeptide reads, in one-letter code: Large ribosomal subunit protein uL24 (105 aa).

The protein belongs to the universal ribosomal protein uL24 family. In terms of assembly, part of the 50S ribosomal subunit.

Its function is as follows. One of two assembly initiator proteins, it binds directly to the 5'-end of the 23S rRNA, where it nucleates assembly of the 50S subunit. One of the proteins that surrounds the polypeptide exit tunnel on the outside of the subunit. The chain is Large ribosomal subunit protein uL24 from Xanthomonas axonopodis pv. citri (strain 306).